The primary structure comprises 255 residues: Acetylglutamate kinase (255 aa).

Substrate contacts are provided by residues 40 to 41 (GG), Arg62, and Asn153.

The protein belongs to the acetylglutamate kinase family. ArgB subfamily.

It localises to the cytoplasm. It carries out the reaction N-acetyl-L-glutamate + ATP = N-acetyl-L-glutamyl 5-phosphate + ADP. Its pathway is amino-acid biosynthesis; L-arginine biosynthesis; N(2)-acetyl-L-ornithine from L-glutamate: step 2/4. In terms of biological role, catalyzes the ATP-dependent phosphorylation of N-acetyl-L-glutamate. In Bacillus anthracis (strain CDC 684 / NRRL 3495), this protein is Acetylglutamate kinase.